The chain runs to 203 residues: Small ribosomal subunit protein uS4c (203 aa).

The interval 19-43 (PGLTNKSPKAGSDLRKQPRSRKKSQ) is disordered. One can recognise an S4 RNA-binding domain in the interval 89 to 152 (MRLDNILFRL…KSRTLIQNSL (64 aa)).

This sequence belongs to the universal ribosomal protein uS4 family. As to quaternary structure, part of the 30S ribosomal subunit. Contacts protein S5. The interaction surface between S4 and S5 is involved in control of translational fidelity.

The protein resides in the plastid. It is found in the chloroplast. In terms of biological role, one of the primary rRNA binding proteins, it binds directly to 16S rRNA where it nucleates assembly of the body of the 30S subunit. Its function is as follows. With S5 and S12 plays an important role in translational accuracy. This chain is Small ribosomal subunit protein uS4c (rps4), found in Jasminum nudiflorum (Winter jasmine).